A 104-amino-acid chain; its full sequence is Pyrimidine/purine nucleoside phosphorylase (104 aa).

This sequence belongs to the nucleoside phosphorylase PpnP family.

It carries out the reaction a purine D-ribonucleoside + phosphate = a purine nucleobase + alpha-D-ribose 1-phosphate. The enzyme catalyses adenosine + phosphate = alpha-D-ribose 1-phosphate + adenine. The catalysed reaction is cytidine + phosphate = cytosine + alpha-D-ribose 1-phosphate. It catalyses the reaction guanosine + phosphate = alpha-D-ribose 1-phosphate + guanine. It carries out the reaction inosine + phosphate = alpha-D-ribose 1-phosphate + hypoxanthine. The enzyme catalyses thymidine + phosphate = 2-deoxy-alpha-D-ribose 1-phosphate + thymine. The catalysed reaction is uridine + phosphate = alpha-D-ribose 1-phosphate + uracil. It catalyses the reaction xanthosine + phosphate = alpha-D-ribose 1-phosphate + xanthine. Functionally, catalyzes the phosphorolysis of diverse nucleosides, yielding D-ribose 1-phosphate and the respective free bases. Can use uridine, adenosine, guanosine, cytidine, thymidine, inosine and xanthosine as substrates. Also catalyzes the reverse reactions. This chain is Pyrimidine/purine nucleoside phosphorylase, found in Syntrophotalea carbinolica (strain DSM 2380 / NBRC 103641 / GraBd1) (Pelobacter carbinolicus).